The chain runs to 399 residues: Centrosomal protein 43 (399 aa).

Positions 70–102 (DGRLVASLVAEFLQFFNLDFTLAVFHPETSTIQ) constitute a LisH domain. Disordered regions lie at residues 142–216 (PASV…SKSS) and 236–311 (DARD…KRGS). Residues Ser-152 and Ser-160 each carry the phosphoserine modification. The segment covering 163–172 (GKSSANSTPS) has biased composition (polar residues). Thr-170 is subject to Phosphothreonine. Positions 175–186 (PRYKGQGKKKTI) are enriched in basic residues. Residues 197 to 216 (SETSQSEPSVSLSESKSKSS) show a composition bias toward low complexity. Ser-202 carries the post-translational modification Phosphoserine. Acidic residues predominate over residues 246–256 (DGDDVEGDSFF). A compositionally biased stretch (basic and acidic residues) spans 259 to 275 (PIPKPEKTYGWRAEPRK). Over residues 290-302 (RSGLSSLAGAPSL) the composition is skewed to low complexity. Phosphoserine occurs at positions 301 and 326. Residues 328 to 354 (GLGTGEDEDYADDFNSASHRSEKSELS) form a disordered region. Residue Tyr-337 is modified to Phosphotyrosine.

Belongs to the CEP43 family. Homodimer. Part of a ternary complex that contains CEP350, CEP43 and MAPRE1. Interacts directly with CEP350 and MAPRE1. Interacts with CEP19. Interacts (via N-terminus) with CEP350 (via C-terminus).

The protein localises to the cytoplasm. The protein resides in the cytoskeleton. It is found in the microtubule organizing center. It localises to the centrosome. Its subcellular location is the centriole. The protein localises to the cilium basal body. Functionally, required for anchoring microtubules to the centrosomes. Required for ciliation. The polypeptide is Centrosomal protein 43 (Mus musculus (Mouse)).